A 158-amino-acid polypeptide reads, in one-letter code: MTQIPMTLRGAEKLREELQHLKSVLRPQIIAAIAEAREHGDLKENAEYHAAREQQGFCEGRIQEIESKLSHAQIIDVTKIANKGIVIFGATVTVLNTHSEEKKIYQIVGDDEANFKKDLISVNSPIARGLIAKKISDVAVIHTPGGEVEYEILDVKYC.

It belongs to the GreA/GreB family.

Necessary for efficient RNA polymerase transcription elongation past template-encoded arresting sites. The arresting sites in DNA have the property of trapping a certain fraction of elongating RNA polymerases that pass through, resulting in locked ternary complexes. Cleavage of the nascent transcript by cleavage factors such as GreA or GreB allows the resumption of elongation from the new 3'terminus. GreA releases sequences of 2 to 3 nucleotides. The chain is Transcription elongation factor GreA from Hamiltonella defensa subsp. Acyrthosiphon pisum (strain 5AT).